Reading from the N-terminus, the 337-residue chain is Ribosomal RNA small subunit methyltransferase H (337 aa).

S-adenosyl-L-methionine-binding positions include 35 to 37 (GGY), D54, F81, D102, and Q109. A disordered region spans residues 286-316 (PVGPSEAEAAANPRARSAKLRAGERTDAPAP). Over residues 289–300 (PSEAEAAANPRA) the composition is skewed to low complexity.

It belongs to the methyltransferase superfamily. RsmH family.

It localises to the cytoplasm. The enzyme catalyses cytidine(1402) in 16S rRNA + S-adenosyl-L-methionine = N(4)-methylcytidine(1402) in 16S rRNA + S-adenosyl-L-homocysteine + H(+). Functionally, specifically methylates the N4 position of cytidine in position 1402 (C1402) of 16S rRNA. The sequence is that of Ribosomal RNA small subunit methyltransferase H from Methylobacterium sp. (strain 4-46).